The sequence spans 254 residues: MTHPFATKQIPFFLTASAPCPYLPGRFERKVFTRIDIGEGPALNDALTHAGFRRSQGVLYRPACEACDACKSVRIDAEAFEWKRRWRKIAARNRDLHVSIDAQTATMEQFDLLSRYLDSRHGDGDMAGMSFGEYVMMVEEGAQRTHVTEYRDSDGVLRAAALTDVLKDGLSLIYSYFDPEWERRSPGAYMILDAVRQAELAGLPFVYLGYWVRQSRKMSYKAQYQPLQVLTPSGWQPHAELAYHDMEDEEDDFD.

This sequence belongs to the R-transferase family. Bpt subfamily.

The protein resides in the cytoplasm. The enzyme catalyses N-terminal L-glutamyl-[protein] + L-leucyl-tRNA(Leu) = N-terminal L-leucyl-L-glutamyl-[protein] + tRNA(Leu) + H(+). It carries out the reaction N-terminal L-aspartyl-[protein] + L-leucyl-tRNA(Leu) = N-terminal L-leucyl-L-aspartyl-[protein] + tRNA(Leu) + H(+). Functions in the N-end rule pathway of protein degradation where it conjugates Leu from its aminoacyl-tRNA to the N-termini of proteins containing an N-terminal aspartate or glutamate. This Maricaulis maris (strain MCS10) (Caulobacter maris) protein is Aspartate/glutamate leucyltransferase.